The chain runs to 576 residues: Arginine--tRNA ligase (576 aa).

The 'HIGH' region signature appears at 122-132 (PNVAKEMHVGH).

This sequence belongs to the class-I aminoacyl-tRNA synthetase family. As to quaternary structure, monomer.

It is found in the cytoplasm. It catalyses the reaction tRNA(Arg) + L-arginine + ATP = L-arginyl-tRNA(Arg) + AMP + diphosphate. This chain is Arginine--tRNA ligase, found in Pectobacterium atrosepticum (strain SCRI 1043 / ATCC BAA-672) (Erwinia carotovora subsp. atroseptica).